The primary structure comprises 229 residues: Biosynthetic peptidoglycan transglycosylase (229 aa).

A helical membrane pass occupies residues 14–34; sequence FITWRFLLVVVLLLLVLLLVL.

It belongs to the glycosyltransferase 51 family.

It is found in the cell inner membrane. The enzyme catalyses [GlcNAc-(1-&gt;4)-Mur2Ac(oyl-L-Ala-gamma-D-Glu-L-Lys-D-Ala-D-Ala)](n)-di-trans,octa-cis-undecaprenyl diphosphate + beta-D-GlcNAc-(1-&gt;4)-Mur2Ac(oyl-L-Ala-gamma-D-Glu-L-Lys-D-Ala-D-Ala)-di-trans,octa-cis-undecaprenyl diphosphate = [GlcNAc-(1-&gt;4)-Mur2Ac(oyl-L-Ala-gamma-D-Glu-L-Lys-D-Ala-D-Ala)](n+1)-di-trans,octa-cis-undecaprenyl diphosphate + di-trans,octa-cis-undecaprenyl diphosphate + H(+). It participates in cell wall biogenesis; peptidoglycan biosynthesis. Functionally, peptidoglycan polymerase that catalyzes glycan chain elongation from lipid-linked precursors. This is Biosynthetic peptidoglycan transglycosylase from Shewanella denitrificans (strain OS217 / ATCC BAA-1090 / DSM 15013).